We begin with the raw amino-acid sequence, 208 residues long: A-type ATP synthase subunit E (208 aa).

The tract at residues 37-57 (DAEKTAEAEKNKILDNGKKQS) is disordered.

This sequence belongs to the V-ATPase E subunit family. Has multiple subunits with at least A(3), B(3), C, D, E, F, H, I and proteolipid K(x).

The protein resides in the cell membrane. Component of the A-type ATP synthase that produces ATP from ADP in the presence of a proton gradient across the membrane. The sequence is that of A-type ATP synthase subunit E from Methanobrevibacter smithii (strain ATCC 35061 / DSM 861 / OCM 144 / PS).